We begin with the raw amino-acid sequence, 337 residues long: Porphobilinogen deaminase (337 aa).

Cysteine 254 carries the post-translational modification S-(dipyrrolylmethanemethyl)cysteine.

This sequence belongs to the HMBS family. Dipyrromethane is required as a cofactor.

The enzyme catalyses 4 porphobilinogen + H2O = hydroxymethylbilane + 4 NH4(+). It functions in the pathway porphyrin-containing compound metabolism; protoporphyrin-IX biosynthesis; coproporphyrinogen-III from 5-aminolevulinate: step 2/4. Tetrapolymerization of the monopyrrole PBG into the hydroxymethylbilane pre-uroporphyrinogen in several discrete steps. The sequence is that of Porphobilinogen deaminase (pda-1) from Neurospora crassa (strain ATCC 24698 / 74-OR23-1A / CBS 708.71 / DSM 1257 / FGSC 987).